The following is a 387-amino-acid chain: Succinate--CoA ligase [ADP-forming] subunit beta (387 aa).

ATP-binding positions include Lys-46, 53 to 55, Glu-99, Ala-102, and Glu-107; that span reads GRG. Asn-199 and Asp-213 together coordinate Mg(2+). Substrate contacts are provided by residues Asn-264 and 321 to 323; that span reads GIV.

It belongs to the succinate/malate CoA ligase beta subunit family. Heterotetramer of two alpha and two beta subunits. It depends on Mg(2+) as a cofactor.

The catalysed reaction is succinate + ATP + CoA = succinyl-CoA + ADP + phosphate. It carries out the reaction GTP + succinate + CoA = succinyl-CoA + GDP + phosphate. The protein operates within carbohydrate metabolism; tricarboxylic acid cycle; succinate from succinyl-CoA (ligase route): step 1/1. Functionally, succinyl-CoA synthetase functions in the citric acid cycle (TCA), coupling the hydrolysis of succinyl-CoA to the synthesis of either ATP or GTP and thus represents the only step of substrate-level phosphorylation in the TCA. The beta subunit provides nucleotide specificity of the enzyme and binds the substrate succinate, while the binding sites for coenzyme A and phosphate are found in the alpha subunit. The protein is Succinate--CoA ligase [ADP-forming] subunit beta of Campylobacter jejuni subsp. jejuni serotype O:23/36 (strain 81-176).